The following is a 158-amino-acid chain: RING-H2 finger protein ATL66 (158 aa).

The chain crosses the membrane as a helical span at residues 33–53 (LFFALALFSVVLFFALLTLYI). An RING-type; atypical zinc finger spans residues 107 to 149 (CCICLGGFEEGEKMKVLPPCSHCYHCECVDRWLKTESSCPLCR).

The protein belongs to the RING-type zinc finger family. ATL subfamily.

Its subcellular location is the membrane. The enzyme catalyses S-ubiquitinyl-[E2 ubiquitin-conjugating enzyme]-L-cysteine + [acceptor protein]-L-lysine = [E2 ubiquitin-conjugating enzyme]-L-cysteine + N(6)-ubiquitinyl-[acceptor protein]-L-lysine.. It functions in the pathway protein modification; protein ubiquitination. The chain is RING-H2 finger protein ATL66 (ATL66) from Arabidopsis thaliana (Mouse-ear cress).